The chain runs to 90 residues: Inner kinetochore subunit MHF1 (90 aa).

It belongs to the TAF9 family. CENP-S/MHF1 subfamily. The MHF histone-fold complex is a heterotetramer of 2 MHF1-MHF2 heterodimers. Together with MPH1/FANCM, forms the FANCM-MHF complex. Component of the inner kinetochore constitutive centromere-associated network (CCAN) (also known as central kinetochore CTF19 complex in yeast), which is composed of at least AME1, CHL4, CNN1, CTF3, CTF19, IML3, MCM16, MCM21, MCM22, MHF1, MHF2, MIF2, NKP1, NKP2, OKP1 and WIP1.

Its function is as follows. dsDNA-binding component of a FANCM-MHF complex involved in DNA damage repair and genome maintenance. FANCM-MHF promotes gene conversion at blocked replication forks, probably by reversal of the stalled fork. Component of the kinetochore, a multiprotein complex that assembles on centromeric DNA and attaches chromosomes to spindle microtubules, mediating chromosome segregation and sister chromatid segregation during meiosis and mitosis. Component of the inner kinetochore constitutive centromere-associated network (CCAN), which serves as a structural platform for outer kinetochore assembly. The sequence is that of Inner kinetochore subunit MHF1 from Saccharomyces cerevisiae (strain ATCC 204508 / S288c) (Baker's yeast).